Reading from the N-terminus, the 602-residue chain is MSSDPMRNIRNFSIIAHVDHGKSTLADRIIQLCGGLEAREMEAQVLDSNPIERERGITIKAQSVSLLYKAQDGQNYHLNLIDTPGHVDFSYEVSRSLAACEGALLVVDASQGVEAQSVANCYTAVEQGLEVVPILNKIDLPTADTERAKAEIETVIGIDASEAVAVSAKTGLYVEQVLEAIVQRIPAPQPRDTEKLQALIIDSWFDNYLGVVSLVRVMQGEITPGNKLLVMSTGRSHQVDAVGVFTPKRKTLAKLTAGEVGWVTASIKDVHGAPVGDTLTLTSDPAPKPLPGFQEVQPRVFAGLFPVDAEDYPDLREALEKLRLNDAALRFEPENSEAMGFGFRCGFLGMLHMEIVQERLEREYDLNLITTAPTVIYEVLKNDGTLVAMDNPAKMPPINQINEIREPIIRSNILTPPDYVGAVITLCEEKRGSQISITYLGNQVQVAYELPMAEVVLDFFDKLKSVTRGYASLDYHFLRFQEGPFVRVDTLINGDRVDALSVIVHRHQAERRGRELCEKMKDLIPRQMFDVAIQAAIGSQIISRSTVKAMRKNVLAKCYGGDISRKKKLLEKQKEGKKRMKQIGRVEIPQEAFLAVLQIDNK.

The tr-type G domain occupies 7 to 189 (RNIRNFSIIA…AIVQRIPAPQ (183 aa)). GTP-binding positions include 19–24 (DHGKST) and 136–139 (NKID).

The protein belongs to the TRAFAC class translation factor GTPase superfamily. Classic translation factor GTPase family. LepA subfamily.

It localises to the cell inner membrane. It carries out the reaction GTP + H2O = GDP + phosphate + H(+). In terms of biological role, required for accurate and efficient protein synthesis under certain stress conditions. May act as a fidelity factor of the translation reaction, by catalyzing a one-codon backward translocation of tRNAs on improperly translocated ribosomes. Back-translocation proceeds from a post-translocation (POST) complex to a pre-translocation (PRE) complex, thus giving elongation factor G a second chance to translocate the tRNAs correctly. Binds to ribosomes in a GTP-dependent manner. In Xylella fastidiosa (strain M23), this protein is Elongation factor 4.